The primary structure comprises 118 residues: Acidic phospholipase A2 PA-3 (118 aa).

Intrachain disulfides connect Cys-11-Cys-71, Cys-27-Cys-117, Cys-29-Cys-45, Cys-44-Cys-98, Cys-51-Cys-91, Cys-60-Cys-84, and Cys-78-Cys-89. Ca(2+) is bound by residues Tyr-28, Gly-30, and Gly-32. The active site involves His-48. A Ca(2+)-binding site is contributed by Asp-49. Asp-92 is a catalytic residue.

The protein belongs to the phospholipase A2 family. Group I subfamily. D49 sub-subfamily. Ca(2+) serves as cofactor. In terms of tissue distribution, expressed by the venom gland.

It localises to the secreted. It carries out the reaction a 1,2-diacyl-sn-glycero-3-phosphocholine + H2O = a 1-acyl-sn-glycero-3-phosphocholine + a fatty acid + H(+). Its function is as follows. PLA2 catalyzes the calcium-dependent hydrolysis of the 2-acyl groups in 3-sn-phosphoglycerides. This chain is Acidic phospholipase A2 PA-3, found in Pseudechis australis (Mulga snake).